The sequence spans 244 residues: MANLLVSTFIFSALLLISTATAATFEILNQCSYTVWAAASPGGGRRLDAGQSWRLDVAAGTKMARIWGRTNCNFDSSGRGRCQTGDCSGGLQCTGWGQPPNTLAEYALNQFNNLDFYDISLVDGFNIPMEFSPTSSNCHRILCTADINGQCPNVLRAPGGCNNPCTVFQTNQYCCTNGQGSCSDTEYSRFFKQRCPDAYSYPQDDPTSTFTCTNTNYRVVFCPRSRLGATGSHQLPIKMVTEEN.

The first 22 residues, 1-22 (MANLLVSTFIFSALLLISTATA), serve as a signal peptide directing secretion. Cystine bridges form between cysteine 31–cysteine 222, cysteine 72–cysteine 82, cysteine 87–cysteine 93, cysteine 138–cysteine 212, cysteine 143–cysteine 195, cysteine 151–cysteine 161, cysteine 165–cysteine 174, and cysteine 175–cysteine 182.

It belongs to the thaumatin family.

This chain is Osmotin-like protein OSM34 (OSM34), found in Arabidopsis thaliana (Mouse-ear cress).